The chain runs to 302 residues: uncharacterized protein (302 aa).

The HTH lysR-type domain maps to 1-60; it reads MRMNMSDFATFFAVARNQSFRAAGDELGLSSSAISHSIKTLEQRLKIRLFNRTTRSVSLT. The segment at residues 20-40 is a DNA-binding region (H-T-H motif); that stretch reads FRAAGDELGLSSSAISHSIKT.

Belongs to the LysR transcriptional regulatory family.

This is an uncharacterized protein from Escherichia coli (strain K12).